Consider the following 282-residue polypeptide: Urease accessory protein UreD (282 aa).

Belongs to the UreD family. In terms of assembly, ureD, UreF and UreG form a complex that acts as a GTP-hydrolysis-dependent molecular chaperone, activating the urease apoprotein by helping to assemble the nickel containing metallocenter of UreC. The UreE protein probably delivers the nickel.

It is found in the cytoplasm. Functionally, required for maturation of urease via the functional incorporation of the urease nickel metallocenter. The chain is Urease accessory protein UreD from Methylobacterium sp. (strain 4-46).